Consider the following 356-residue polypeptide: Tyrosine recombinase XerS (356 aa).

The Core-binding (CB) domain maps to 16-121; sequence LMPWFVLEYY…ALSSLYKYLT (106 aa). The Tyr recombinase domain maps to 169–354; the sequence is KFLDYVENEY…VNDEQKNALD (186 aa). Catalysis depends on residues Arg210, Lys234, His306, Arg309, and His332. Catalysis depends on Tyr341, which acts as the O-(3'-phospho-DNA)-tyrosine intermediate.

This sequence belongs to the 'phage' integrase family. XerS subfamily.

The protein resides in the cytoplasm. FtsK is required for recombination. Its function is as follows. Site-specific tyrosine recombinase, which acts by catalyzing the cutting and rejoining of the recombining DNA molecules. Essential to convert dimers of the bacterial chromosome into monomers to permit their segregation at cell division. This chain is Tyrosine recombinase XerS, found in Streptococcus thermophilus (strain CNRZ 1066).